The primary structure comprises 520 residues: Sensory neuron membrane protein 2 (520 aa).

The Cytoplasmic segment spans residues 1–7; it reads MLGKHSK. The helical transmembrane segment at 8 to 28 threads the bilayer; that stretch reads IFFGVSLIFLVIAIVLASWGF. Topologically, residues 29 to 468 are extracellular; the sequence is QKIVNKQIQK…DSHKLLGYVE (440 aa). Residues Asn-44, Asn-67, Asn-104, Asn-228, Asn-271, Asn-313, and Asn-342 are each glycosylated (N-linked (GlcNAc...) asparagine). Cystine bridges form between Cys-267–Cys-337, Cys-298–Cys-361, and Cys-339–Cys-350. Residues 469–489 form a helical membrane-spanning segment; the sequence is VAKWFLLTIAIISVIASAVAV. Residues 490–520 lie on the Cytoplasmic side of the membrane; sequence ARANALLSWPRNSNSVSFILGPSVTQVNKGN.

This sequence belongs to the CD36 family. Localizes to cells surrounding the sensory neurons in the antenna. Associate in a ratio of 2:1 with the neurons expressing the other subtype SNMP1.

It is found in the cell membrane. Its function is as follows. Plays an olfactory role that is not restricted to pheromone sensitivity. May play a role in the elimination of lipophilic components from the sensillum lymph. This is Sensory neuron membrane protein 2 from Heliothis virescens (Tobacco budworm moth).